Reading from the N-terminus, the 291-residue chain is MSCQPFTSADTFIPLNSESSATLPLIMHHSAAECLPASNHATNVMSTATGLHYSVPSCHYGNQPSTYGVMAGSLTPCLYKFPDHTLSHGFPPMYQPLLPEDPTAADFKQELRRKSKLVEEPIDMDSPEIRELEKFPNEFKVRRIKLGYTQTNVGEALAAVHGSEFSQTTICRFENLQLSFKNACKLKAILSKWLEEAEQVGALYNEKVGANERKRKRRTTISIAAKDALERHFGEQNKPSSQEILRMAEELNLEKEVVRVWFCNRRQREKRVKTSLNQSLFTISKEHLECR.

The 9aaTAD signature appears at 5–13; sequence PFTSADTFI. A POU-specific domain is found at 124-198; it reads MDSPEIRELE…ILSKWLEEAE (75 aa). The homeobox DNA-binding region spans 214-273; that stretch reads KRKRRTTISIAAKDALERHFGEQNKPSSQEILRMAEELNLEKEVVRVWFCNRRQREKRVK.

The protein belongs to the POU transcription factor family. Class-1 subfamily. As to quaternary structure, interacts with PITX1. Interacts with LHX3. Interacts with ELK1.

It localises to the nucleus. In terms of biological role, transcription factor involved in the specification of the lactotrope, somatotrope, and thyrotrope phenotypes in the developing anterior pituitary. Activates growth hormone and prolactin genes. Specifically binds to the consensus sequence 5'-TAAAT-3'. The chain is Pituitary-specific positive transcription factor 1 (POU1F1) from Sus scrofa (Pig).